The chain runs to 388 residues: Pre-mRNA-splicing factor cwf2 (388 aa).

Positions 43–63 (VKRKKQPARKQIETRPEYEME) are disordered. The C3H1-type zinc finger occupies 111-138 (NPGSFFCLYFARGMCSEGSKCEYLHRLP). Residues 174 to 248 (YTLYVGGITP…ECLNVRWATT (75 aa)) enclose the RRM domain. The segment at 331–352 (PNKSQSEEGSNDDHKSVTTTES) is disordered.

Belongs to the RRM CWC2 family. As to quaternary structure, belongs to the 40S cdc5-associated complex (or cwf complex), a spliceosome sub-complex reminiscent of a late-stage spliceosome composed of the U2, U5 and U6 snRNAs and at least brr2, cdc5, cwf2/prp3, cwf3/syf1, cwf4/syf3, cwf5/ecm2, spp42/cwf6, cwf7/spf27, cwf8, cwf9, cwf10, cwf11, cwf12, prp45/cwf13, cwf14, cwf15, cwf16, cwf17, cwf18, cwf19, cwf20, cwf21, cwf22, cwf23, cwf24, cwf25, cwf26, cyp7/cwf27, cwf28, cwf29/ist3, lea1, msl1, prp5/cwf1, prp10, prp12/sap130, prp17, prp22, sap61, sap62, sap114, sap145, slu7, smb1, smd1, smd3, smf1, smg1 and syf2.

It localises to the nucleus. Its function is as follows. Involved in the first step of pre-mRNA splicing. Required for cell growth and cell cycle control. Plays a role in the levels of the U1, U4, U5 and U6 snRNAs and the maintenance of the U4/U6 snRNA complex. May provide the link between the 'nineteen complex' NTC spliceosome protein complex and the spliceosome through the U6 snRNA. Associates predominantly with U6 snRNAs in assembled active spliceosomes. Binds directly to the internal stem-loop (ISL) domain of the U6 snRNA and to the pre-mRNA intron near the 5' splice site during the activation and catalytic phases of the spliceosome cycle. Involved in pre-mRNA splicing. In Schizosaccharomyces pombe (strain 972 / ATCC 24843) (Fission yeast), this protein is Pre-mRNA-splicing factor cwf2 (cwf2).